Consider the following 193-residue polypeptide: Potassium-transporting ATPase KdpC subunit (193 aa).

The chain crosses the membrane as a helical span at residues 14–34; that stretch reads ITFTFLVLCGLVYPLIVTGIA.

This sequence belongs to the KdpC family. As to quaternary structure, the system is composed of three essential subunits: KdpA, KdpB and KdpC.

The protein localises to the cell membrane. Part of the high-affinity ATP-driven potassium transport (or Kdp) system, which catalyzes the hydrolysis of ATP coupled with the electrogenic transport of potassium into the cytoplasm. This subunit acts as a catalytic chaperone that increases the ATP-binding affinity of the ATP-hydrolyzing subunit KdpB by the formation of a transient KdpB/KdpC/ATP ternary complex. The polypeptide is Potassium-transporting ATPase KdpC subunit (Bacillus thuringiensis subsp. konkukian (strain 97-27)).